Here is a 137-residue protein sequence, read N- to C-terminus: Basic phospholipase A2 homolog APL-K49 (137 aa).

The first 16 residues, 1-16 (MRTLWIVALLLVGVEG), serve as a signal peptide directing secretion. Disulfide bonds link Cys42–Cys131, Cys44–Cys60, Cys59–Cys111, Cys65–Cys137, Cys66–Cys104, Cys73–Cys97, and Cys91–Cys102. Residues 121 to 133 (KKYKAYFKLKCKK) form an important for membrane-damaging activities in eukaryotes and bacteria; heparin-binding region.

It belongs to the phospholipase A2 family. Group II subfamily. K49 sub-subfamily. As to quaternary structure, monomer. Expressed by the venom gland.

The protein resides in the secreted. Snake venom phospholipase A2 (PLA2) that lacks enzymatic activity. Does not show antibacterial activity. Is myotoxic and displays edema-inducing activities. A model of myotoxic mechanism has been proposed: an apo Lys49-PLA2 is activated by the entrance of a hydrophobic molecule (e.g. fatty acid) at the hydrophobic channel of the protein leading to a reorientation of a monomer. This reorientation causes a transition between 'inactive' to 'active' states, causing alignment of C-terminal and membrane-docking sites (MDoS) side-by-side and putting the membrane-disruption sites (MDiS) in the same plane, exposed to solvent and in a symmetric position for both monomers. The MDoS region stabilizes the toxin on membrane by the interaction of charged residues with phospholipid head groups. Subsequently, the MDiS region destabilizes the membrane with penetration of hydrophobic residues. This insertion causes a disorganization of the membrane, allowing an uncontrolled influx of ions (i.e. calcium and sodium), and eventually triggering irreversible intracellular alterations and cell death. The polypeptide is Basic phospholipase A2 homolog APL-K49 (Agkistrodon piscivorus leucostoma (Western cottonmouth)).